The chain runs to 808 residues: Type VI secretion system spike protein VgrG4b (808 aa).

It belongs to the VgrG protein family.

Its subcellular location is the secreted. Part of the H2 type VI secretion system (H2-T6SS) specialized secretion system, which delivers several virulence factors in both prokaryotic and eukaryotic cells during infection. Allows the delivery of the phospholipase effector PldA to target cells where it exerts its toxicity. In Pseudomonas aeruginosa (strain ATCC 15692 / DSM 22644 / CIP 104116 / JCM 14847 / LMG 12228 / 1C / PRS 101 / PAO1), this protein is Type VI secretion system spike protein VgrG4b.